A 187-amino-acid polypeptide reads, in one-letter code: Capsid protein (187 aa).

The span at 151-180 (RRGSARVVRSPRRRTPSPRRRRSQSPRRRP) shows a compositional bias: basic residues. The segment at 151-187 (RRGSARVVRSPRRRTPSPRRRRSQSPRRRPQSPASNC) is disordered. A phosphoserine; by host mark is found at serine 160, serine 167, and serine 175. 3 repeat units span residues 160-164 (SPRRR), 167-171 (SPRRR), and 175-179 (SPRRR). The tract at residues 160–179 (SPRRRTPSPRRRRSQSPRRR) is 3 X 5 AA repeats of S-P-R-R-R. Residues 163–180 (RRTPSPRRRRSQSPRRRP) carry the Bipartite nuclear localization signal motif. An RNA binding region spans residues 181-187 (QSPASNC).

Belongs to the orthohepadnavirus core antigen family. As to quaternary structure, homodimerizes, then multimerizes. Interacts with cytosol exposed regions of viral L glycoprotein present in the reticulum-to-Golgi compartment. Interacts with human FLNB. Phosphorylated form interacts with host importin alpha; this interaction depends on the exposure of the NLS, which itself depends upon genome maturation and/or phosphorylation of the capsid protein. Interacts with host NUP153. In terms of processing, phosphorylated by host SRPK1, SRPK2, and maybe protein kinase C or GAPDH. Phosphorylation is critical for pregenomic RNA packaging. Protein kinase C phosphorylation is stimulated by HBx protein and may play a role in transport of the viral genome to the nucleus at the late step during the viral replication cycle.

Its subcellular location is the virion. The protein localises to the host cytoplasm. Self assembles to form an icosahedral capsid. Most capsids appear to be large particles with an icosahedral symmetry of T=4 and consist of 240 copies of capsid protein, though a fraction forms smaller T=3 particles consisting of 180 capsid proteins. Entering capsids are transported along microtubules to the nucleus. Phosphorylation of the capsid is thought to induce exposure of nuclear localization signal in the C-terminal portion of the capsid protein that allows binding to the nuclear pore complex via the importin (karyopherin-) alpha and beta. Capsids are imported in intact form through the nuclear pore into the nuclear basket, where it probably binds NUP153. Only capsids that contain the mature viral genome can release the viral DNA and capsid protein into the nucleoplasm. Immature capsids get stuck in the basket. Capsids encapsulate the pre-genomic RNA and the P protein. Pre-genomic RNA is reverse-transcribed into DNA while the capsid is still in the cytoplasm. The capsid can then either be directed to the nucleus, providing more genomes for transcription, or bud through the endoplasmic reticulum to provide new virions. In Urocitellus parryii kennicottii (ASHV), this protein is Capsid protein.